A 689-amino-acid chain; its full sequence is Glycine--tRNA ligase beta subunit (689 aa).

Belongs to the class-II aminoacyl-tRNA synthetase family. In terms of assembly, tetramer of two alpha and two beta subunits.

The protein resides in the cytoplasm. It carries out the reaction tRNA(Gly) + glycine + ATP = glycyl-tRNA(Gly) + AMP + diphosphate. The chain is Glycine--tRNA ligase beta subunit from Sodalis glossinidius (strain morsitans).